A 323-amino-acid polypeptide reads, in one-letter code: Beta-ketoacyl-[acyl-carrier-protein] synthase III (323 aa).

Residues Cys114 and His250 contribute to the active site. The segment at 251-255 (QANRR) is ACP-binding. The active site involves Asn280.

This sequence belongs to the thiolase-like superfamily. FabH family. In terms of assembly, homodimer.

The protein localises to the cytoplasm. The enzyme catalyses malonyl-[ACP] + acetyl-CoA + H(+) = 3-oxobutanoyl-[ACP] + CO2 + CoA. Its pathway is lipid metabolism; fatty acid biosynthesis. Its function is as follows. Catalyzes the condensation reaction of fatty acid synthesis by the addition to an acyl acceptor of two carbons from malonyl-ACP. Catalyzes the first condensation reaction which initiates fatty acid synthesis and may therefore play a role in governing the total rate of fatty acid production. Possesses both acetoacetyl-ACP synthase and acetyl transacylase activities. Its substrate specificity determines the biosynthesis of branched-chain and/or straight-chain of fatty acids. The chain is Beta-ketoacyl-[acyl-carrier-protein] synthase III from Rhodospirillum centenum (strain ATCC 51521 / SW).